A 146-amino-acid chain; its full sequence is Hemoglobin subunit beta (146 aa).

An N-acetylvaline modification is found at V1. The Globin domain occupies 2 to 146; it reads HLTAEEKSAV…VANALAHKYH (145 aa). T12 carries the phosphothreonine modification. At S44 the chain carries Phosphoserine. K59 is subject to N6-acetyllysine. H63 contacts heme b. K82 carries the post-translational modification N6-acetyllysine. Residue H92 participates in heme b binding. C93 carries the S-nitrosocysteine modification. The residue at position 144 (K144) is an N6-acetyllysine.

It belongs to the globin family. As to quaternary structure, heterotetramer of two alpha chains and two beta chains. As to expression, red blood cells.

Its function is as follows. Involved in oxygen transport from the lung to the various peripheral tissues. This Leptonychotes weddellii (Weddell seal) protein is Hemoglobin subunit beta (HBB).